Consider the following 98-residue polypeptide: Feather keratin (98 aa).

Ala-1 bears the N-acetylalanine mark.

It belongs to the avian keratin family. In terms of assembly, the avian keratins (F-ker, S-ker, C-ker and B-ker) are a complex mixture of very similar polypeptides.

The polypeptide is Feather keratin (Chroicocephalus novaehollandiae (Silver gull)).